A 968-amino-acid chain; its full sequence is RNA polymerase-associated protein RapA (968 aa).

Positions 163–332 constitute a Helicase ATP-binding domain; sequence EVGRRYAPRV…FARLRLLDPD (170 aa). 176–183 lines the ATP pocket; the sequence is DEVGLGKT. Residues 278–281 carry the DEAH box motif; the sequence is DEAH. A Helicase C-terminal domain is found at 491 to 643; that stretch reads RVDWLIAFLK…ELTCPSGHVL (153 aa).

It belongs to the SNF2/RAD54 helicase family. RapA subfamily. As to quaternary structure, interacts with the RNAP. Has a higher affinity for the core RNAP than for the holoenzyme. Its ATPase activity is stimulated by binding to RNAP.

Functionally, transcription regulator that activates transcription by stimulating RNA polymerase (RNAP) recycling in case of stress conditions such as supercoiled DNA or high salt concentrations. Probably acts by releasing the RNAP, when it is trapped or immobilized on tightly supercoiled DNA. Does not activate transcription on linear DNA. Probably not involved in DNA repair. The sequence is that of RNA polymerase-associated protein RapA from Shewanella sp. (strain W3-18-1).